The chain runs to 620 residues: MPLLQIAEPGQSSAPHQHRIAIGIDLGTTHSLAATVLSGKPKVLNDVQNRRLLPSIVHYGDNTTHYGEEAKPFIIADPKNTIVSVKRFMGRSKADIKFQHPYELVGSEKNEMPAFETRAGRKTPVEISAEILKQLKDRAEDSLQNPVNGAVITVPAYFDEAQRQATRYAAQLAGLNILRLLNEPTAAAVAYGLDQESNLATDRNYVIYDLGGGTFDVSILRFSQGVFEVLATGGHTALGGDDLDRLIVKWAKKQLNIDVLSDEDYAVFIVAARQAKEQLSTQDSVELKLLEATLTLDRPTFESIIQVALDKTISVCKRVLRDAKLELTDIQNVVLVGGSTRSYAVQKAVREVFAQEPLCTINPDEVVAIGASITANQLIGNSQDGSLLLDVTPLSLGLETMGGLVERLISRNTAIPVARRQEFTTYQDGQTAMLIHVVQGERDLVEHCRSLGRFVLHGIPPMTAGQARIEVTFQVDADGLLTVSAREATSGVQAHIDIKPSYGLSEADTERLLIEGFQHAEEDKNLRHLKETKVEAERELEALEQALKVDADLLDEKQLEALNSAKESLKAQLEGSDIQAIEQAVQQLKVHSDAFAALRMNRHIDHALKGTKLDDWSKSN.

The protein belongs to the heat shock protein 70 family.

Chaperone involved in the maturation of iron-sulfur cluster-containing proteins. Has a low intrinsic ATPase activity which is markedly stimulated by HscB. The polypeptide is Chaperone protein HscA homolog (Acinetobacter baumannii (strain SDF)).